A 263-amino-acid chain; its full sequence is Pheophorbidase (263 aa).

The region spanning 13-244 (HFVFVHGASH…LEESDHSAFF (232 aa)) is the AB hydrolase-1 domain. Ser-88 (acyl-ester intermediate) is an active-site residue. Active-site charge relay system residues include Asp-212 and His-240.

It belongs to the AB hydrolase superfamily. In terms of assembly, homodimer.

Its subcellular location is the cytoplasm. The enzyme catalyses pheophorbide a + H2O + H(+) = pyropheophorbide a + methanol + CO2. With respect to regulation, inhibited by methanol and phenylmethylsulfonicfluoride (PMSF). Functionally, involved in chlorophyll degradation. Specific for the pheophorbides of the dihydroporphyrin and tetrahydroporphyrin types. Chlorophyllide a, pheophytin a and the nonfluorescent chlorophyll catabolite (NCC) are not used as substrates. The sequence is that of Pheophorbidase (PPD) from Raphanus sativus (Radish).